The following is a 146-amino-acid chain: Large ribosomal subunit protein uL15 (146 aa).

A compositionally biased stretch (basic and acidic residues) spans 1–13 (MKLHELKPSEGSR). Residues 1 to 54 (MKLHELKPSEGSRKVRNRVGRGIGSGNGKTAGKGHKGQNARSGGGVRPGFEGGQ) are disordered. Gly residues-rich tracts occupy residues 21-31 (RGIGSGNGKTA) and 42-52 (SGGGVRPGFEG).

The protein belongs to the universal ribosomal protein uL15 family. Part of the 50S ribosomal subunit.

Its function is as follows. Binds to the 23S rRNA. This chain is Large ribosomal subunit protein uL15, found in Bacillus velezensis (strain DSM 23117 / BGSC 10A6 / LMG 26770 / FZB42) (Bacillus amyloliquefaciens subsp. plantarum).